The sequence spans 797 residues: Trafficking protein particle complex subunit 12 (797 aa).

Disordered regions lie at residues 1-257 and 286-338; these read META…PSLS and SNPN…VPES. A compositionally biased stretch (low complexity) spans 9–23; sequence QSPSEASPSAQAGPE. A compositionally biased stretch (basic and acidic residues) spans 29–43; sequence MSREEESQPLYHEET. Residues 47–58 are compositionally biased toward acidic residues; it reads GGDEFASEENEP. Composition is skewed to basic and acidic residues over residues 66-75 and 107-121; these read FGDKLNEHMM and ATDH…KEVV. Serine 125 and serine 128 each carry phosphoserine. Threonine 130 is subject to Phosphothreonine. The span at 173 to 185 shows a compositional bias: basic and acidic residues; it reads VGPKDSLAPREEQ. Polar residues predominate over residues 206–216; that stretch reads IFSQATATPSQ. A compositionally biased stretch (low complexity) spans 232 to 244; it reads SPSFSSTSETSAK. A phosphoserine mark is found at serine 234, serine 309, and serine 314. TPR repeat units follow at residues 607–640, 642–675, 682–715, and 716–749; these read GRVL…YPEQ, PQLL…TQKL, IMVL…DPTN, and AVAN…DPRH.

Component of the multisubunit TRAPP (transport protein particle) complex, which includes at least TRAPPC2, TRAPPC2L, TRAPPC3, TRAPPC3L, TRAPPC4, TRAPPC5, TRAPPC8, TRAPPC9, TRAPPC10, TRAPPC11 and TRAPPC12. Interacts with CENPE. In terms of processing, phosphorylated as the cells enter mitosis but is dephosphorylated at or before the onset of anaphase. The phosphorylated form recruits CENPE to kinetochores more efficiently than the non-phosphorylated form.

It is found in the endoplasmic reticulum-Golgi intermediate compartment. The protein resides in the nucleus. Functionally, component of the TRAPP complex, which is involved in endoplasmic reticulum to Golgi apparatus trafficking at a very early stage. Also plays a role in chromosome congression, kinetochore assembly and stability and controls the recruitment of CENPE to the kinetochores. In Mus musculus (Mouse), this protein is Trafficking protein particle complex subunit 12.